The chain runs to 423 residues: Glutamyl-tRNA reductase (423 aa).

Residues 51–54 (TCNR), Ser-99, 104–106 (EDQ), and Gln-110 contribute to the substrate site. Cys-52 serves as the catalytic Nucleophile. 179–184 (GSGEMG) lines the NADP(+) pocket.

This sequence belongs to the glutamyl-tRNA reductase family. As to quaternary structure, homodimer.

It carries out the reaction (S)-4-amino-5-oxopentanoate + tRNA(Glu) + NADP(+) = L-glutamyl-tRNA(Glu) + NADPH + H(+). It participates in porphyrin-containing compound metabolism; protoporphyrin-IX biosynthesis; 5-aminolevulinate from L-glutamyl-tRNA(Glu): step 1/2. Its function is as follows. Catalyzes the NADPH-dependent reduction of glutamyl-tRNA(Glu) to glutamate 1-semialdehyde (GSA). This is Glutamyl-tRNA reductase from Methanoculleus marisnigri (strain ATCC 35101 / DSM 1498 / JR1).